The primary structure comprises 313 residues: Calcyphosin-2 (313 aa).

EF-hand domains are found at residues 144-179, 180-215, and 216-251; these read RILT…FHLE, VSEK…EMNE, and YRKS…KKHS. Residues aspartate 193, asparagine 195, asparagine 197, lysine 199, and glutamate 204 each contribute to the Ca(2+) site.

This chain is Calcyphosin-2 (CAPS2), found in Macaca fascicularis (Crab-eating macaque).